We begin with the raw amino-acid sequence, 105 residues long: UPF0148 protein PH0795 (105 aa).

The protein belongs to the UPF0148 family.

In Pyrococcus horikoshii (strain ATCC 700860 / DSM 12428 / JCM 9974 / NBRC 100139 / OT-3), this protein is UPF0148 protein PH0795.